Reading from the N-terminus, the 86-residue chain is BaSO(4)-adsorbing protein 1 (86 aa).

Intrachain disulfides connect Cys-6–Cys-22, Cys-18–Cys-49, and Cys-39–Cys-54. Residues 58–86 form a disordered region; the sequence is GDSASNTQNQGGSRRQENEDQGDDEWDRK. Residues 59–70 show a composition bias toward polar residues; it reads DSASNTQNQGGS. A compositionally biased stretch (acidic residues) spans 76–86; sequence EDQGDDEWDRK.

In terms of tissue distribution, salivary gland (at protein level).

It is found in the secreted. Inhibits lectin and classical pathways of complement system activation in the host with no significant effect on the alternative pathway. Inhibits host extrinsic blood coagulation pathway but not the intrinsic cascade. Binds to neutral and negatively charged membranes in vitro; binding is reduced upon pre-incubation with Ca(2+). The sequence is that of BaSO(4)-adsorbing protein 1 from Ornithodoros savignyi (African eyed tampan).